The following is a 372-amino-acid chain: Glutamate 5-kinase (372 aa).

Lysine 14 contacts ATP. Serine 54, aspartate 141, and asparagine 153 together coordinate substrate. Residue 173-174 coordinates ATP; sequence TD. Residues 280 to 358 enclose the PUA domain; it reads RGHVVIDDGA…GEIESVLGYM (79 aa).

It belongs to the glutamate 5-kinase family.

The protein localises to the cytoplasm. The enzyme catalyses L-glutamate + ATP = L-glutamyl 5-phosphate + ADP. It functions in the pathway amino-acid biosynthesis; L-proline biosynthesis; L-glutamate 5-semialdehyde from L-glutamate: step 1/2. Catalyzes the transfer of a phosphate group to glutamate to form L-glutamate 5-phosphate. This is Glutamate 5-kinase from Paraburkholderia xenovorans (strain LB400).